The sequence spans 235 residues: LexA repressor (235 aa).

Residues Phe-26–Thr-46 constitute a DNA-binding region (H-T-H motif). Residues Ser-156 and Lys-194 each act as for autocatalytic cleavage activity in the active site.

It belongs to the peptidase S24 family. As to quaternary structure, homodimer.

It catalyses the reaction Hydrolysis of Ala-|-Gly bond in repressor LexA.. In terms of biological role, represses a number of genes involved in the response to DNA damage (SOS response), including recA and lexA. In the presence of single-stranded DNA, RecA interacts with LexA causing an autocatalytic cleavage which disrupts the DNA-binding part of LexA, leading to derepression of the SOS regulon and eventually DNA repair. The protein is LexA repressor of Paramagnetospirillum magneticum (strain ATCC 700264 / AMB-1) (Magnetospirillum magneticum).